Reading from the N-terminus, the 501-residue chain is ATP synthase subunit alpha (501 aa).

169-176 serves as a coordination point for ATP; that stretch reads GDRQTGKT.

Belongs to the ATPase alpha/beta chains family. As to quaternary structure, F-type ATPases have 2 components, CF(1) - the catalytic core - and CF(0) - the membrane proton channel. CF(1) has five subunits: alpha(3), beta(3), gamma(1), delta(1), epsilon(1). CF(0) has three main subunits: a(1), b(2) and c(9-12). The alpha and beta chains form an alternating ring which encloses part of the gamma chain. CF(1) is attached to CF(0) by a central stalk formed by the gamma and epsilon chains, while a peripheral stalk is formed by the delta and b chains.

It is found in the cell membrane. The enzyme catalyses ATP + H2O + 4 H(+)(in) = ADP + phosphate + 5 H(+)(out). Its function is as follows. Produces ATP from ADP in the presence of a proton gradient across the membrane. The alpha chain is a regulatory subunit. The polypeptide is ATP synthase subunit alpha (Streptococcus uberis (strain ATCC BAA-854 / 0140J)).